A 193-amino-acid chain; its full sequence is Imidazoleglycerol-phosphate dehydratase (193 aa).

This sequence belongs to the imidazoleglycerol-phosphate dehydratase family.

Its subcellular location is the cytoplasm. It catalyses the reaction D-erythro-1-(imidazol-4-yl)glycerol 3-phosphate = 3-(imidazol-4-yl)-2-oxopropyl phosphate + H2O. The protein operates within amino-acid biosynthesis; L-histidine biosynthesis; L-histidine from 5-phospho-alpha-D-ribose 1-diphosphate: step 6/9. This chain is Imidazoleglycerol-phosphate dehydratase, found in Saccharolobus islandicus (strain Y.G.57.14 / Yellowstone #1) (Sulfolobus islandicus).